The chain runs to 539 residues: CTP synthase (539 aa).

Residues 1–268 form an amidoligase domain region; it reads MSFKSIFLTG…SDFLLNKLGF (268 aa). CTP is bound at residue S14. Position 14 (S14) interacts with UTP. 15–20 contacts ATP; it reads SLGKGL. L-glutamine is bound at residue Y55. D72 contributes to the ATP binding site. Mg(2+) contacts are provided by D72 and E142. CTP-binding positions include 149-151, 188-193, and K224; these read DIE and KTKPTQ. Residues 188 to 193 and K224 contribute to the UTP site; that span reads KTKPTQ. In terms of domain architecture, Glutamine amidotransferase type-1 spans 294 to 532; the sequence is RIGLVGKYLE…IRAAKAYSLE (239 aa). Residue G353 participates in L-glutamine binding. C380 acts as the Nucleophile; for glutamine hydrolysis in catalysis. Residues 381–384, E404, and R460 contribute to the L-glutamine site; that span reads LGMQ. Residues H505 and E507 contribute to the active site.

Belongs to the CTP synthase family. As to quaternary structure, homotetramer.

The catalysed reaction is UTP + L-glutamine + ATP + H2O = CTP + L-glutamate + ADP + phosphate + 2 H(+). It carries out the reaction L-glutamine + H2O = L-glutamate + NH4(+). The enzyme catalyses UTP + NH4(+) + ATP = CTP + ADP + phosphate + 2 H(+). Its pathway is pyrimidine metabolism; CTP biosynthesis via de novo pathway; CTP from UDP: step 2/2. Its activity is regulated as follows. Allosterically activated by GTP, when glutamine is the substrate; GTP has no effect on the reaction when ammonia is the substrate. The allosteric effector GTP functions by stabilizing the protein conformation that binds the tetrahedral intermediate(s) formed during glutamine hydrolysis. Inhibited by the product CTP, via allosteric rather than competitive inhibition. Its function is as follows. Catalyzes the ATP-dependent amination of UTP to CTP with either L-glutamine or ammonia as the source of nitrogen. Regulates intracellular CTP levels through interactions with the four ribonucleotide triphosphates. In Chlamydia trachomatis serovar L2 (strain ATCC VR-902B / DSM 19102 / 434/Bu), this protein is CTP synthase.